The primary structure comprises 562 residues: Alpha-1D adrenergic receptor (562 aa).

Over 1–90 the chain is Extracellular; that stretch reads MTFRDILSVT…VGGLVVSAQG (90 aa). Disordered stretches follow at residues 13–44 and 50–69; these read GPRA…GVPG and AVVG…EAGA. A compositionally biased stretch (gly residues) spans 21–44; the sequence is GGSGAGGGAGTVGPEGPAVGGVPG. Residues asparagine 60 and asparagine 76 are each glycosylated (N-linked (GlcNAc...) asparagine). Residues 91–115 form a helical membrane-spanning segment; sequence VGVGVFLAAFILTAVAGNLLVILSV. Over 116-127 the chain is Cytoplasmic; the sequence is ACNRHLQTVTNY. The chain crosses the membrane as a helical span at residues 128-153; it reads FIVNLAVADLLLSAAVLPFSATMEVL. Residues 154-163 lie on the Extracellular side of the membrane; that stretch reads GFWPFGRTFC. A helical transmembrane segment spans residues 164-186; it reads DVWAAVDVLCCTASILSLCTISV. Residues 187-207 lie on the Cytoplasmic side of the membrane; it reads DRYVGVRHSLKYPAIMTERKA. Residues 208-232 form a helical membrane-spanning segment; sequence AAILALLWAVALVVSVGPLLGWKEP. Residues 233–245 lie on the Extracellular side of the membrane; it reads VPPDERFCGITEE. Residues 246–269 traverse the membrane as a helical segment; sequence VGYAIFSSVCSFYLPMAVIVVMYC. Residues 270–342 are Cytoplasmic-facing; sequence RVYVVARSTT…KFSREKKAAK (73 aa). Residues 343 to 367 form a helical membrane-spanning segment; the sequence is TLAIVVGVFVLCWFPFFFVLPLGSL. Over 368–374 the chain is Extracellular; that stretch reads FPQLKPS. The helical transmembrane segment at 375-399 threads the bilayer; that stretch reads EGVFKVIFWLGYFNSCVNPLIYPCS. Topologically, residues 400–562 are cytoplasmic; sequence SREFKRAFLR…DLSNLRETDI (163 aa). A lipid anchor (S-palmitoyl cysteine) is attached at cysteine 413. The segment at 444-472 is disordered; it reads QPAHRTPRGSPSPHCTPRPGLRRHAGGAG.

It belongs to the G-protein coupled receptor 1 family. Adrenergic receptor subfamily. ADRA1D sub-subfamily. As to quaternary structure, interacts with FLNA (via filamin repeat 21); increases PKA-mediated phosphorylation of FLNA. In terms of processing, palmitoylated. Palmitoylation by ZDHHC21 may increase the expression of the receptor and regulate downstream signaling.

It is found in the cell membrane. Functionally, this alpha-adrenergic receptor mediates its effect through the influx of extracellular calcium. The chain is Alpha-1D adrenergic receptor (Adra1d) from Mus musculus (Mouse).